A 50-amino-acid chain; its full sequence is PhoP/PhoQ regulator MgrB (50 aa).

Topologically, residues 1 to 4 (MLDL) are cytoplasmic. A helical membrane pass occupies residues 5 to 27 (NITKLVTTVVIIAACCLFYLLAL). Residues 28–50 (DSYCDQGGTFSTGICAITTIVPW) are Periplasmic-facing.

The protein belongs to the MgrB family. In terms of assembly, probably interacts with the periplasmic domain of PhoQ.

It is found in the cell inner membrane. In terms of biological role, phoP-regulated transcription is redox-sensitive, being activated when the periplasm becomes more reducing. MgrB acts between DsbA/DsbB and PhoP/PhoQ in this pathway. Represses PhoP/PhoQ signaling, possibly by binding to the periplasmic domain of PhoQ, altering its activity and that of downstream effector PhoP. The polypeptide is PhoP/PhoQ regulator MgrB (Yersinia pestis).